Reading from the N-terminus, the 311-residue chain is Aquaporin NIP3-1 (311 aa).

Positions 1-34 (MEMAAPNGGGAAGMSSPVNGASAPATPGTPAPLF) are disordered. Residues 20-34 (GASAPATPGTPAPLF) show a composition bias toward low complexity. Helical transmembrane passes span 85-105 (LGAEFVGTFILIFFATAAPIV) and 111-131 (GAISPFGNAACAGLAVTTIIL). Positions 142 to 144 (NPS) match the NPA 1 motif. 3 consecutive transmembrane segments (helical) span residues 158–178 (LQVPAYVAVQVLGSICAGFAL), 202–222 (AFFTEFIITFNLLFVVTAVAT), and 226–246 (AVGELAGIAVGAAVTLNILIA). The short motif at 255-257 (NPV) is the NPA 2 element. A helical transmembrane segment spans residues 273–293 (WIYLIAPTLGAVAGAGVYTAV).

The protein belongs to the MIP/aquaporin (TC 1.A.8) family. NIP (TC 1.A.8.12) subfamily. Expressed in roots and leaves.

The protein resides in the membrane. In terms of biological role, aquaporins facilitate the transport of water and small neutral solutes across cell membranes. The protein is Aquaporin NIP3-1 (NIP3-1) of Oryza sativa subsp. japonica (Rice).